Reading from the N-terminus, the 698-residue chain is MOXD1 homolog 1 (698 aa).

The first 20 residues, 1 to 20, serve as a signal peptide directing secretion; the sequence is MSVQDVLWIVLTVQLSFGLA. N-linked (GlcNAc...) asparagine glycosylation is found at asparagine 36, asparagine 140, and asparagine 221. The DOMON domain maps to 54-174; sequence GLYWLKWWIN…DTFKVLWSIG (121 aa). The active site involves tyrosine 232. The Cu cation site is built by histidine 265 and histidine 266. Cysteine 272 and cysteine 309 form a disulfide bridge. Cu cation is bound by residues histidine 347, histidine 425, and histidine 427. 2 disulfides stabilise this stretch: cysteine 403–cysteine 516 and cysteine 479–cysteine 501. Histidine 425 is an active-site residue. N-linked (GlcNAc...) asparagine glycosylation occurs at asparagine 465. Methionine 500 contributes to the Cu cation binding site. Residues asparagine 538 and asparagine 561 are each glycosylated (N-linked (GlcNAc...) asparagine).

The protein belongs to the copper type II ascorbate-dependent monooxygenase family. It depends on Cu(2+) as a cofactor.

The protein resides in the secreted. In Drosophila melanogaster (Fruit fly), this protein is MOXD1 homolog 1.